The sequence spans 228 residues: Aspartyl protease inhibitor (228 aa).

An N-terminal signal peptide occupies residues methionine 1 to alanine 15. Over residues lysine 88–proline 112 the composition is skewed to basic and acidic residues. The disordered stretch occupies residues lysine 88–serine 119. A disulfide bridge links cysteine 134 with cysteine 224.

Belongs to the protease inhibitor I33 family.

It localises to the secreted. In terms of biological role, aspartyl protease inhibitor. The protein is Aspartyl protease inhibitor of Trichostrongylus colubriformis (Black scour worm).